A 788-amino-acid chain; its full sequence is Protein FAR1-RELATED SEQUENCE 12 (788 aa).

The 77-residue stretch at 57 to 133 folds into the FAR1 1 domain; that stretch reads EFYNAYAART…QKEHNHELGG (77 aa). Residues 127–200 form a disordered region; it reads HNHELGGEGS…GEVSDDHHQT (74 aa). The segment covering 142-151 has biased composition (low complexity); the sequence is PRPSRAPAPT. Basic and acidic residues predominate over residues 165–175; it reads KVVDESDRETR. Residues 225 to 301 enclose the FAR1 2 domain; that stretch reads QFYQAYAEVV…NKDHNHDLEP (77 aa). In terms of domain architecture, MULE spans 399-495; the sequence is SVVFDTSYRK…SAWQIREKER (97 aa). An SWIM-type zinc finger spans residues 674 to 710; that stretch reads HAVTFSASNLNSSCSCQMFEHEGLLCRHILKVFNLLD.

Belongs to the FHY3/FAR1 family. In terms of tissue distribution, expressed in hypocotyls, rosette and cauline leaves, inflorescences stems, flowers and siliques.

The protein localises to the nucleus. Putative transcription activator involved in regulating light control of development. This chain is Protein FAR1-RELATED SEQUENCE 12 (FRS12), found in Arabidopsis thaliana (Mouse-ear cress).